The following is a 262-amino-acid chain: Shikimate dehydrogenase (NADP(+)) (262 aa).

Residues 13–15 (SLS) and Thr-59 each bind shikimate. The active-site Proton acceptor is Lys-63. Asp-75 serves as a coordination point for NADP(+). Asn-84 and Asp-99 together coordinate shikimate. NADP(+)-binding positions include 122–126 (GAGGA), 144–149 (NRTLEK), and Met-205. Shikimate is bound at residue Tyr-207. Gly-228 contributes to the NADP(+) binding site.

This sequence belongs to the shikimate dehydrogenase family. Homodimer.

The catalysed reaction is shikimate + NADP(+) = 3-dehydroshikimate + NADPH + H(+). The protein operates within metabolic intermediate biosynthesis; chorismate biosynthesis; chorismate from D-erythrose 4-phosphate and phosphoenolpyruvate: step 4/7. Involved in the biosynthesis of the chorismate, which leads to the biosynthesis of aromatic amino acids. Catalyzes the reversible NADPH linked reduction of 3-dehydroshikimate (DHSA) to yield shikimate (SA). In Ignicoccus hospitalis (strain KIN4/I / DSM 18386 / JCM 14125), this protein is Shikimate dehydrogenase (NADP(+)).